The sequence spans 418 residues: Methionine aminopeptidase 2 (418 aa).

The interval 18-49 is disordered; the sequence is VSEPAAVDDSEVTEDATVQDKKKKKKKKKKKG. Basic residues predominate over residues 38–49; it reads KKKKKKKKKKKG. H172 is a binding site for substrate. A divalent metal cation-binding residues include D192, D203, and H272. H280 serves as a coordination point for substrate. A divalent metal cation contacts are provided by E305 and E399.

The protein belongs to the peptidase M24A family. Methionine aminopeptidase eukaryotic type 2 subfamily. Requires Co(2+) as cofactor. It depends on Zn(2+) as a cofactor. Mn(2+) serves as cofactor. Fe(2+) is required as a cofactor.

The protein localises to the cytoplasm. It catalyses the reaction Release of N-terminal amino acids, preferentially methionine, from peptides and arylamides.. Cotranslationally removes the N-terminal methionine from nascent proteins. The N-terminal methionine is often cleaved when the second residue in the primary sequence is small and uncharged (Met-Ala-, Cys, Gly, Pro, Ser, Thr, or Val). This is Methionine aminopeptidase 2 from Kluyveromyces lactis (strain ATCC 8585 / CBS 2359 / DSM 70799 / NBRC 1267 / NRRL Y-1140 / WM37) (Yeast).